Reading from the N-terminus, the 739-residue chain is Probable endo-1,3(4)-beta-glucanase An02g00850 (739 aa).

The first 24 residues, Met-1–Ala-24, serve as a signal peptide directing secretion. Residues Glu-31–Gly-283 enclose the GH16 domain. N-linked (GlcNAc...) asparagine glycosylation is found at Asn-59 and Asn-74. Residue Glu-140 is the Nucleophile of the active site. The active-site Proton donor is Glu-145. Asn-396 carries N-linked (GlcNAc...) asparagine glycosylation. Composition is skewed to low complexity over residues Ser-431–Ser-442, Thr-452–Thr-499, and Gly-507–Ala-522. The tract at residues Ser-431–Gly-718 is disordered. N-linked (GlcNAc...) asparagine glycans are attached at residues Asn-459 and Asn-482. A compositionally biased stretch (polar residues) spans Thr-523–Ala-532. 2 N-linked (GlcNAc...) asparagine glycosylation sites follow: Asn-526 and Asn-537. Over residues Ser-539–Ala-548 the composition is skewed to polar residues. Residues Gly-561–Ala-587 show a composition bias toward low complexity. 4 N-linked (GlcNAc...) asparagine glycosylation sites follow: Asn-569, Asn-581, Asn-592, and Asn-620. Positions Ala-597–Ser-641 are enriched in low complexity. The segment covering Pro-654 to Val-673 has biased composition (polar residues). Low complexity predominate over residues Pro-674–Pro-713. Residue Gly-717 is the site of GPI-anchor amidated glycine attachment. The propeptide at Gly-718–Ala-739 is removed in mature form.

It belongs to the glycosyl hydrolase 16 family.

It localises to the cell membrane. The catalysed reaction is Endohydrolysis of (1-&gt;3)- or (1-&gt;4)-linkages in beta-D-glucans when the glucose residue whose reducing group is involved in the linkage to be hydrolyzed is itself substituted at C-3.. In terms of biological role, mixed-linked glucanase involved in the degradation of complex natural cellulosic substrates. The polypeptide is Probable endo-1,3(4)-beta-glucanase An02g00850 (Aspergillus niger (strain ATCC MYA-4892 / CBS 513.88 / FGSC A1513)).